Consider the following 150-residue polypeptide: UPF0208 membrane protein VV1_2222 (150 aa).

The next 2 membrane-spanning stretches (helical) occupy residues 42-62 (FGIK…MAFN) and 70-90 (AIVM…WLGH).

It belongs to the UPF0208 family.

It is found in the cell inner membrane. In Vibrio vulnificus (strain CMCP6), this protein is UPF0208 membrane protein VV1_2222.